Here is a 687-residue protein sequence, read N- to C-terminus: DNA-directed RNA polymerase subunit beta' (687 aa).

The Zn(2+) site is built by C76, C78, C94, and C97. Mg(2+) is bound by residues D496, D498, and D500.

The protein belongs to the RNA polymerase beta' chain family. RpoC1 subfamily. In terms of assembly, in plastids the minimal PEP RNA polymerase catalytic core is composed of four subunits: alpha, beta, beta', and beta''. When a (nuclear-encoded) sigma factor is associated with the core the holoenzyme is formed, which can initiate transcription. It depends on Mg(2+) as a cofactor. Zn(2+) is required as a cofactor.

It is found in the plastid. The protein localises to the chloroplast. The enzyme catalyses RNA(n) + a ribonucleoside 5'-triphosphate = RNA(n+1) + diphosphate. Its function is as follows. DNA-dependent RNA polymerase catalyzes the transcription of DNA into RNA using the four ribonucleoside triphosphates as substrates. The protein is DNA-directed RNA polymerase subunit beta' of Ipomoea purpurea (Common morning glory).